Consider the following 397-residue polypeptide: Circumsporozoite protein (397 aa).

Residues 1–18 (MMRKLAILSVSSFLFVEA) form the signal peptide. Residues 69-313 (SRSLGENDDG…KNNNNEEPSD (245 aa)) are disordered. A required for the binding to heparan sulfate proteoglycans (HSPGs) on the surface of host hepatocytes region spans residues 85–92 (KLRKPKHK). Positions 93-97 (KLKQP) are region I; contains the proteolytic cleavage site. Positions 101 to 273 (NPDPNANPNV…PNANPNANPN (173 aa)) are enriched in low complexity. 42 repeat units span residues 105–108 (NANP), 109–112 (NVDP), 113–116 (NANP), 117–120 (NVDP), 121–124 (NANP), 125–128 (NVDP), 129–132 (NANP), 133–136 (NANP), 137–140 (NANP), 141–144 (NANP), 145–148 (NANP), 149–152 (NANP), 153–156 (NANP), 157–160 (NANP), 161–164 (NANP), 165–168 (NANP), 169–172 (NANP), 173–176 (NANP), 177–180 (NANP), 181–184 (NANP), 185–188 (NANP), 189–192 (NANP), 193–196 (NANP), 197–200 (NVDP), 201–204 (NANP), 205–208 (NANP), 209–212 (NANP), 213–216 (NANP), 217–220 (NANP), 221–224 (NANP), 225–228 (NANP), 229–232 (NANP), 233–236 (NANP), 237–240 (NANP), 241–244 (NANP), 245–248 (NANP), 249–252 (NANP), 253–256 (NANP), 257–260 (NANP), 261–264 (NANP), 265–268 (NANP), and 269–272 (NANP). The interval 105–272 (NANPNVDPNA…NPNANPNANP (168 aa)) is 42 X 4 AA tandem repeats of N-[AV]-[ND]-P. The span at 274–290 (KNNQGNGQGHNMPNDPN) shows a compositional bias: polar residues. Residues 295–309 (ENANANSAVKNNNNE) are compositionally biased toward low complexity. The region spanning 322–375 (KIQNSLSTEWSPCSVTCGNGIQVRIKPGSANKPKDELDYANDIEKKICKMEKCS) is the TSP type-1 domain. 2 cysteine pairs are disulfide-bonded: Cys-334–Cys-369 and Cys-338–Cys-374. Thr-337 is a glycosylation site (O-linked (Fuc) threonine). Cys-374 carries the GPI-anchor amidated cysteine lipid modification. The propeptide at 375–397 (SSVFNVVNSSIGLIMVLSFLFLN) is removed in mature form.

The protein belongs to the plasmodium circumsporozoite protein family. Post-translationally, during host cell invasion, proteolytically cleaved at the cell membrane in the region I by a papain-like cysteine protease of parasite origin. Cleavage is triggered by the sporozoite contact with highly sulfated heparan sulfate proteoglycans (HSPGs) present on the host hepatocyte cell surface. Cleavage exposes the TSP type-1 (TSR) domain and is required for productive invasion of host hepatocytes but not for adhesion to the host cell membrane. Cleavage is dispensable for sporozoite development in the oocyst, motility and for traversal of host and vector cells. In terms of processing, O-glycosylated; maybe by POFUT2.

It is found in the cell membrane. The protein localises to the cytoplasm. Its function is as follows. Essential sporozoite protein. In the mosquito vector, required for sporozoite development in the oocyst, migration through the vector hemolymph and entry into the vector salivary glands. In the vertebrate host, required for sporozoite migration through the host dermis and infection of host hepatocytes. Binds to highly sulfated heparan sulfate proteoglycans (HSPGs) on the surface of host hepatocytes. In terms of biological role, in the vertebrate host, binds to highly sulfated heparan sulfate proteoglycans (HSPGs) on the surface of host hepatocytes and is required for sporozoite invasion of the host hepatocytes. The protein is Circumsporozoite protein of Plasmodium falciparum (isolate NF54).